The primary structure comprises 479 residues: Ribosomal RNA small subunit methyltransferase F (479 aa).

S-adenosyl-L-methionine-binding positions include 125 to 131, Glu-149, Asp-176, and Asp-194; that span reads AAAPGSK. Cys-247 serves as the catalytic Nucleophile.

Belongs to the class I-like SAM-binding methyltransferase superfamily. RsmB/NOP family.

The protein localises to the cytoplasm. It carries out the reaction cytidine(1407) in 16S rRNA + S-adenosyl-L-methionine = 5-methylcytidine(1407) in 16S rRNA + S-adenosyl-L-homocysteine + H(+). Its function is as follows. Specifically methylates the cytosine at position 1407 (m5C1407) of 16S rRNA. The sequence is that of Ribosomal RNA small subunit methyltransferase F from Shigella boydii serotype 4 (strain Sb227).